A 335-amino-acid chain; its full sequence is Holliday junction branch migration complex subunit RuvB (335 aa).

The tract at residues 4 to 184 (ADRIISGQAK…FGIVQRLEFY (181 aa)) is large ATPase domain (RuvB-L). ATP is bound by residues I23, R24, G65, K68, T69, T70, 131 to 133 (EDY), R174, Y184, and R221. T69 serves as a coordination point for Mg(2+). The segment at 185–255 (SVEDLTSIVA…VAKQALSMLD (71 aa)) is small ATPAse domain (RuvB-S). Residues 258-335 (DAGFDYLDRK…RHFGLQKLSD (78 aa)) form a head domain (RuvB-H) region. R294, R313, and R318 together coordinate DNA.

It belongs to the RuvB family. In terms of assembly, homohexamer. Forms an RuvA(8)-RuvB(12)-Holliday junction (HJ) complex. HJ DNA is sandwiched between 2 RuvA tetramers; dsDNA enters through RuvA and exits via RuvB. An RuvB hexamer assembles on each DNA strand where it exits the tetramer. Each RuvB hexamer is contacted by two RuvA subunits (via domain III) on 2 adjacent RuvB subunits; this complex drives branch migration. In the full resolvosome a probable DNA-RuvA(4)-RuvB(12)-RuvC(2) complex forms which resolves the HJ.

It is found in the cytoplasm. It carries out the reaction ATP + H2O = ADP + phosphate + H(+). Functionally, the RuvA-RuvB-RuvC complex processes Holliday junction (HJ) DNA during genetic recombination and DNA repair, while the RuvA-RuvB complex plays an important role in the rescue of blocked DNA replication forks via replication fork reversal (RFR). RuvA specifically binds to HJ cruciform DNA, conferring on it an open structure. The RuvB hexamer acts as an ATP-dependent pump, pulling dsDNA into and through the RuvAB complex. RuvB forms 2 homohexamers on either side of HJ DNA bound by 1 or 2 RuvA tetramers; 4 subunits per hexamer contact DNA at a time. Coordinated motions by a converter formed by DNA-disengaged RuvB subunits stimulates ATP hydrolysis and nucleotide exchange. Immobilization of the converter enables RuvB to convert the ATP-contained energy into a lever motion, pulling 2 nucleotides of DNA out of the RuvA tetramer per ATP hydrolyzed, thus driving DNA branch migration. The RuvB motors rotate together with the DNA substrate, which together with the progressing nucleotide cycle form the mechanistic basis for DNA recombination by continuous HJ branch migration. Branch migration allows RuvC to scan DNA until it finds its consensus sequence, where it cleaves and resolves cruciform DNA. This is Holliday junction branch migration complex subunit RuvB from Haemophilus influenzae (strain 86-028NP).